The sequence spans 150 residues: Large ribosomal subunit protein bL9 (150 aa).

It belongs to the bacterial ribosomal protein bL9 family.

Functionally, binds to the 23S rRNA. This Arthrobacter sp. (strain FB24) protein is Large ribosomal subunit protein bL9.